Here is a 373-residue protein sequence, read N- to C-terminus: Type II secretion system protein L (373 aa).

Topologically, residues 1-214 (MTAWRDTLGR…RRSDPMQRWN (214 aa)) are cytoplasmic. Residues 215 to 233 (LLLAVAALVLLAVAGWLLL) traverse the membrane as a helical segment. Residues 234 to 373 (DNRRQAADDL…AKEAADAAQR (140 aa)) are Periplasmic-facing.

Belongs to the GSP L family. Type II secretion system is composed of four main components: the outer membrane complex, the inner membrane complex, the cytoplasmic secretion ATPase and the periplasm-spanning pseudopilus. Forms homodimers. Interacts with XpsM/GspM. Interacts with XpsE/GspE and XpsF/GspF.

The protein localises to the cell inner membrane. Its function is as follows. Inner membrane component of the type II secretion system required for the energy-dependent secretion of extracellular factors such as proteases and toxins from the periplasm. Plays a role in the complex assembly and recruits XpsM resulting in a stable complex in the inner membrane. Provides thus a link between the energy-providing XpsE protein in the cytoplasm and the rest of the T2SS machinery. The protein is Type II secretion system protein L (pefL) of Xanthomonas campestris pv. campestris (strain ATCC 33913 / DSM 3586 / NCPPB 528 / LMG 568 / P 25).